The chain runs to 169 residues: Ribosome maturation factor RimM (169 aa).

One can recognise a PRC barrel domain in the interval 93-167 (PENSFFISDI…KISVILPKGL (75 aa)).

Belongs to the RimM family. In terms of assembly, binds ribosomal protein uS19.

It is found in the cytoplasm. In terms of biological role, an accessory protein needed during the final step in the assembly of 30S ribosomal subunit, possibly for assembly of the head region. Essential for efficient processing of 16S rRNA. May be needed both before and after RbfA during the maturation of 16S rRNA. It has affinity for free ribosomal 30S subunits but not for 70S ribosomes. The polypeptide is Ribosome maturation factor RimM (Ruminiclostridium cellulolyticum (strain ATCC 35319 / DSM 5812 / JCM 6584 / H10) (Clostridium cellulolyticum)).